The primary structure comprises 93 residues: Protein Tat (93 aa).

Residues M1–N24 form an interaction with human CREBBP region. Residues M1–G48 form a transactivation region. Positions 22, 25, and 27 each coordinate Zn(2+). Residues C22 to C37 form a cysteine-rich region. K28 carries the N6-acetyllysine; by host PCAF modification. Residues C30, H33, C34, and C37 each contribute to the Zn(2+) site. The tract at residues F38–G48 is core. A compositionally biased stretch (basic residues) spans G48–T58. A disordered region spans residues G48–S93. The Nuclear localization signal, RNA-binding (TAR), and protein transduction motif lies at R49–R57. The interaction with the host capping enzyme RNGTT stretch occupies residues R49 to E86. Residues K50 and K51 each carry the N6-acetyllysine; by host EP300 and GCN5L2 modification. Residue R52 is modified to Asymmetric dimethylarginine; by host PRMT6. A Glycyl lysine isopeptide (Lys-Gly) (interchain with G-Cter in ubiquitin) cross-link involves residue K71. The span at P73 to T82 shows a compositional bias: polar residues. The span at G83–S93 shows a compositional bias: basic and acidic residues.

This sequence belongs to the lentiviruses Tat family. Interacts with host CCNT1. Associates with the P-TEFb complex composed at least of Tat, P-TEFb (CDK9 and CCNT1), TAR RNA, RNA Pol II. Recruits the HATs CREBBP, TAF1/TFIID, EP300, PCAF and GCN5L2. Interacts with host KAT5/Tip60; this interaction targets the latter to degradation. Interacts with the host deacetylase SIRT1. Interacts with host capping enzyme RNGTT; this interaction stimulates RNGTT. Binds to host KDR, and to the host integrins ITGAV/ITGB3 and ITGA5/ITGB1. Interacts with host KPNB1/importin beta-1 without previous binding to KPNA1/importin alpha-1. Interacts with EIF2AK2. Interacts with host nucleosome assembly protein NAP1L1; this interaction may be required for the transport of Tat within the nucleus, since the two proteins interact at the nuclear rim. Interacts with host C1QBP/SF2P32; this interaction involves lysine-acetylated Tat. Interacts with the host chemokine receptors CCR2, CCR3 and CXCR4. Interacts with host DPP4/CD26; this interaction may trigger an anti-proliferative effect. Interacts with host LDLR. Interacts with the host extracellular matrix metalloproteinase MMP1. Interacts with host PRMT6; this interaction mediates Tat's methylation. Interacts with, and is ubiquitinated by MDM2/Hdm2. Interacts with host PSMC3 and HTATIP2. Interacts with STAB1; this interaction may overcome SATB1-mediated repression of IL2 and IL2RA (interleukin) in T cells by binding to the same domain than HDAC1. Interacts (when acetylated) with human CDK13, thereby increasing HIV-1 mRNA splicing and promoting the production of the doubly spliced HIV-1 protein Nef. Interacts with host TBP; this interaction modulates the activity of transcriptional pre-initiation complex. Interacts with host RELA. Asymmetrical arginine methylation by host PRMT6 seems to diminish the transactivation capacity of Tat and affects the interaction with host CCNT1. In terms of processing, acetylation by EP300, CREBBP, GCN5L2/GCN5 and PCAF regulates the transactivation activity of Tat. EP300-mediated acetylation of Lys-50 promotes dissociation of Tat from the TAR RNA through the competitive binding to PCAF's bromodomain. In addition, the non-acetylated Tat's N-terminus can also interact with PCAF. PCAF-mediated acetylation of Lys-28 enhances Tat's binding to CCNT1. Lys-50 is deacetylated by SIRT1. Post-translationally, polyubiquitination by host MDM2 does not target Tat to degradation, but activates its transactivation function and fosters interaction with CCNT1 and TAR RNA. Phosphorylated by EIF2AK2 on serine and threonine residues adjacent to the basic region important for TAR RNA binding and function. Phosphorylation of Tat by EIF2AK2 is dependent on the prior activation of EIF2AK2 by dsRNA.

It localises to the host nucleus. It is found in the host nucleolus. The protein localises to the host cytoplasm. Its subcellular location is the secreted. Its function is as follows. Transcriptional activator that increases RNA Pol II processivity, thereby increasing the level of full-length viral transcripts. Recognizes a hairpin structure at the 5'-LTR of the nascent viral mRNAs referred to as the transactivation responsive RNA element (TAR) and recruits the cyclin T1-CDK9 complex (P-TEFb complex) that will in turn hyperphosphorylate the RNA polymerase II to allow efficient elongation. The CDK9 component of P-TEFb and other Tat-activated kinases hyperphosphorylate the C-terminus of RNA Pol II that becomes stabilized and much more processive. Other factors such as HTATSF1/Tat-SF1, SUPT5H/SPT5, and HTATIP2 are also important for Tat's function. Besides its effect on RNA Pol II processivity, Tat induces chromatin remodeling of proviral genes by recruiting the histone acetyltransferases (HATs) CREBBP, EP300 and PCAF to the chromatin. This also contributes to the increase in proviral transcription rate, especially when the provirus integrates in transcriptionally silent region of the host genome. To ensure maximal activation of the LTR, Tat mediates nuclear translocation of NF-kappa-B by interacting with host RELA. Through its interaction with host TBP, Tat may also modulate transcription initiation. Tat can reactivate a latently infected cell by penetrating in it and transactivating its LTR promoter. In the cytoplasm, Tat is thought to act as a translational activator of HIV-1 mRNAs. Extracellular circulating Tat can be endocytosed by surrounding uninfected cells via the binding to several surface receptors such as CD26, CXCR4, heparan sulfate proteoglycans (HSPG) or LDLR. Neurons are rarely infected, but they internalize Tat via their LDLR. Through its interaction with nuclear HATs, Tat is potentially able to control the acetylation-dependent cellular gene expression. Modulates the expression of many cellular genes involved in cell survival, proliferation or in coding for cytokines or cytokine receptors. Tat plays a role in T-cell and neurons apoptosis. Tat induced neurotoxicity and apoptosis probably contribute to neuroAIDS. Circulating Tat also acts as a chemokine-like and/or growth factor-like molecule that binds to specific receptors on the surface of the cells, affecting many cellular pathways. In the vascular system, Tat binds to ITGAV/ITGB3 and ITGA5/ITGB1 integrins dimers at the surface of endothelial cells and competes with bFGF for heparin-binding sites, leading to an excess of soluble bFGF. This Pan troglodytes (Chimpanzee) protein is Protein Tat.